An 86-amino-acid chain; its full sequence is Conotoxin Lt15a (86 aa).

Positions 1–23 are cleaved as a signal peptide; the sequence is MEKLTILILVATVLLAIQVLVQS. Residues 24–49 constitute a propeptide that is removed on maturation; sequence DGENPVKGRVKHYAAKRFSALFRGPR.

The protein belongs to the conotoxin O2 superfamily. Contains 4 disulfide bonds. Expressed by the venom duct.

The protein localises to the secreted. The protein is Conotoxin Lt15a of Conus litteratus (Lettered cone).